The primary structure comprises 345 residues: D-fructose 1,6-bisphosphatase class 2/sedoheptulose 1,7-bisphosphatase (345 aa).

Residues aspartate 33, glutamate 57, aspartate 97, and glutamate 100 each contribute to the Mn(2+) site. Residues 100-102 (EGT), tyrosine 131, 176-178 (RPR), and 198-200 (DGD) each bind substrate. Position 225 (glutamate 225) interacts with Mn(2+).

Belongs to the FBPase class 2 family. Homotetramer. Requires Mn(2+) as cofactor.

It catalyses the reaction beta-D-fructose 1,6-bisphosphate + H2O = beta-D-fructose 6-phosphate + phosphate. The enzyme catalyses D-sedoheptulose 1,7-bisphosphate + H2O = D-sedoheptulose 7-phosphate + phosphate. It participates in carbohydrate biosynthesis; Calvin cycle. Inhibited by AMP and slightly innibited by hydrogen peroxyde. In terms of biological role, catalyzes the hydrolysis of fructose 1,6-bisphosphate (Fru 1,6-P2) and sedoheptulose 1,7-bisphosphate (Sed 1,7-P2) to fructose 6-phosphate and sedoheptulose 7-phosphate, respectively. The polypeptide is D-fructose 1,6-bisphosphatase class 2/sedoheptulose 1,7-bisphosphatase (Synechococcus elongatus (strain ATCC 33912 / PCC 7942 / FACHB-805) (Anacystis nidulans R2)).